Reading from the N-terminus, the 839-residue chain is MSDNEIKNETPKKLSLQRRTKTTIADGKVQVEVRKSRKIDTAVAKAEQAKLKAKQEAEAKAQEKQAAEKAAQAQTEAKAQTEQACTTKKTIQPPIIPGKQKAMPKTEAKKATPKTEKIVDAEKEAKRKEEAELRRKQEELASPKAEMEAKRAAENARRLAEIAREETVENGEEFEDNRFTSTYAREADRDHDRRSEGNRTRAKGGVAKAKKGGREDDKNERNSDRRNAKDIKGKKSKGKKGASLQQAFTKPVQAVKTDVVIGETITVAELANKMAIKATEIIKTMMKMGEMVTINQVIDQETAQLVAEELGHKVILRKENELEESVMEDRDIDAEKVTRAPVVTIMGHVDHGKTLLLDYIRKAKVAAGEAGGITQHIGAYHVETEDGKMITFLDTPGHAAFTSMRARGAKATDIVVLVVAADDGVMPQTIEAIQHAKAAGAPLVVAVNKIDKPEADPSRVEQELLQYEVVSEKFGGDVQFVAVSAKKGMGIDELLEAIILQSEVLELTAVKKGMASGVVIESYLDKGRGPVATILVQSGTLNKGDIVLCGFEYGRVRAMRDENGKDINSAGPSIPVEVLGLSGVPSAGDEATVVRDEKKAREVALYRQGKYREVKLARQQKAKLENMFSNMTEGDIAELNVIVKADVQGSVEAICQALGELSTEEVKVKVVGSGVGGITETDATLAAASNAIMVGFNVRADASARRVIENENIDLRYYSIIYELLNEIKAAMTGMLQPEFKQEIIGLAEVRNIFRHPKFGAIAGCMVTEGIIKRNNPIRVLRDNVVIFEGELDSLRRFKDDVAEVRNGMECGIGVKNYNDVKVGDQIEVFEVVEIKRSI.

2 stretches are compositionally biased toward basic and acidic residues: residues 1–12 and 57–67; these read MSDNEIKNETPK and AEAKAQEKQAA. 2 disordered regions span residues 1–21 and 57–244; these read MSDNEIKNETPKKLSLQRRTK and AEAK…GASL. Residues 68-90 show a composition bias toward low complexity; it reads EKAAQAQTEAKAQTEQACTTKKT. Basic and acidic residues-rich tracts occupy residues 104–167, 185–199, and 212–233; these read PKTE…REET, READRDHDRRSEGNR, and GGREDDKNERNSDRRNAKDIKG. A tr-type G domain is found at 338-508; the sequence is TRAPVVTIMG…ILQSEVLELT (171 aa). Positions 347–354 are G1; the sequence is GHVDHGKT. 347-354 provides a ligand contact to GTP; sequence GHVDHGKT. Residues 372–376 are G2; that stretch reads GITQH. Residues 394 to 397 are G3; that stretch reads DTPG. GTP contacts are provided by residues 394-398 and 448-451; these read DTPGH and NKID. A G4 region spans residues 448–451; that stretch reads NKID. The tract at residues 484–486 is G5; sequence SAK.

The protein belongs to the TRAFAC class translation factor GTPase superfamily. Classic translation factor GTPase family. IF-2 subfamily.

It is found in the cytoplasm. Its function is as follows. One of the essential components for the initiation of protein synthesis. Protects formylmethionyl-tRNA from spontaneous hydrolysis and promotes its binding to the 30S ribosomal subunits. Also involved in the hydrolysis of GTP during the formation of the 70S ribosomal complex. The chain is Translation initiation factor IF-2 from Haemophilus ducreyi (strain 35000HP / ATCC 700724).